The primary structure comprises 204 residues: Urease accessory protein UreG (204 aa).

11 to 18 is a GTP binding site; that stretch reads GPVGAGKH.

This sequence belongs to the SIMIBI class G3E GTPase family. UreG subfamily. Homodimer. UreD, UreF and UreG form a complex that acts as a GTP-hydrolysis-dependent molecular chaperone, activating the urease apoprotein by helping to assemble the nickel containing metallocenter of UreC. The UreE protein probably delivers the nickel.

The protein localises to the cytoplasm. Functionally, facilitates the functional incorporation of the urease nickel metallocenter. This process requires GTP hydrolysis, probably effectuated by UreG. This Staphylococcus xylosus protein is Urease accessory protein UreG.